The primary structure comprises 557 residues: Membrane protein insertase YidC (557 aa).

3 helical membrane passes run 371-391 (WGWS…PLSA), 437-457 (LGGC…YWVL), and 515-535 (PIVF…YWVV).

The protein belongs to the OXA1/ALB3/YidC family. Type 1 subfamily. Interacts with the Sec translocase complex via SecD. Specifically interacts with transmembrane segments of nascent integral membrane proteins during membrane integration.

It localises to the cell inner membrane. In terms of biological role, required for the insertion and/or proper folding and/or complex formation of integral membrane proteins into the membrane. Involved in integration of membrane proteins that insert both dependently and independently of the Sec translocase complex, as well as at least some lipoproteins. Aids folding of multispanning membrane proteins. In Polynucleobacter necessarius subsp. necessarius (strain STIR1), this protein is Membrane protein insertase YidC.